Reading from the N-terminus, the 377-residue chain is Alanine racemase (377 aa).

Lys39 acts as the Proton acceptor; specific for D-alanine in catalysis. Position 39 is an N6-(pyridoxal phosphate)lysine (Lys39). Position 137 (Arg137) interacts with substrate. Residue Tyr266 is the Proton acceptor; specific for L-alanine of the active site. Met314 lines the substrate pocket.

Belongs to the alanine racemase family. The cofactor is pyridoxal 5'-phosphate.

The enzyme catalyses L-alanine = D-alanine. Its pathway is amino-acid biosynthesis; D-alanine biosynthesis; D-alanine from L-alanine: step 1/1. Catalyzes the interconversion of L-alanine and D-alanine. May also act on other amino acids. The chain is Alanine racemase (alr) from Symbiobacterium thermophilum (strain DSM 24528 / JCM 14929 / IAM 14863 / T).